The chain runs to 130 residues: Iron-sulfur cluster insertion protein ErpA (130 aa).

3 residues coordinate iron-sulfur cluster: Cys-46, Cys-116, and Cys-118.

The protein belongs to the HesB/IscA family. Homodimer. Iron-sulfur cluster is required as a cofactor.

In terms of biological role, required for insertion of 4Fe-4S clusters for at least IspG. This chain is Iron-sulfur cluster insertion protein ErpA, found in Legionella pneumophila (strain Paris).